The sequence spans 465 residues: Soluble pyridine nucleotide transhydrogenase (465 aa).

36–45 contacts FAD; it reads ERYDNVGGGC.

The protein belongs to the class-I pyridine nucleotide-disulfide oxidoreductase family. It depends on FAD as a cofactor.

It localises to the cytoplasm. It carries out the reaction NAD(+) + NADPH = NADH + NADP(+). Functionally, conversion of NADPH, generated by peripheral catabolic pathways, to NADH, which can enter the respiratory chain for energy generation. This is Soluble pyridine nucleotide transhydrogenase from Sodalis glossinidius (strain morsitans).